The chain runs to 218 residues: Dehydration-responsive element-binding protein 1B (218 aa).

Positions 1–26 (MEVEEAAYRTVWSEPPKRPAGRTKFR) are disordered. The AP2/ERF DNA-binding region spans 32 to 95 (VYRGVRRRGG…RGRAACLNFA (64 aa)). The segment at 131–151 (SAAPSSPAETFADDGDEEEDN) is disordered. Residues 141–151 (FADDGDEEEDN) are compositionally biased toward acidic residues.

The protein belongs to the AP2/ERF transcription factor family. ERF subfamily.

It localises to the nucleus. Functionally, transcriptional activator that binds specifically to the DNA sequence 5'-[AG]CCGAC-3'. Binding to the C-repeat/DRE element mediates high salinity- and dehydration-inducible transcription. Confers resistance to high salt, cold and drought stress. This chain is Dehydration-responsive element-binding protein 1B (DREB1B), found in Oryza sativa subsp. indica (Rice).